Consider the following 310-residue polypeptide: Pantothenate kinase (310 aa).

95–102 (GSVAVGKS) contributes to the ATP binding site.

Belongs to the prokaryotic pantothenate kinase family.

The protein localises to the cytoplasm. It carries out the reaction (R)-pantothenate + ATP = (R)-4'-phosphopantothenate + ADP + H(+). It participates in cofactor biosynthesis; coenzyme A biosynthesis; CoA from (R)-pantothenate: step 1/5. The chain is Pantothenate kinase from Rhodococcus jostii (strain RHA1).